The sequence spans 251 residues: uncharacterized protein (251 aa).

The protein belongs to the chlamydial CPn_0206/CT_203/TC_0475 family.

This is an uncharacterized protein from Chlamydia trachomatis serovar D (strain ATCC VR-885 / DSM 19411 / UW-3/Cx).